Here is a 92-residue protein sequence, read N- to C-terminus: Large ribosomal subunit protein eL34 (92 aa).

The protein belongs to the eukaryotic ribosomal protein eL34 family.

This is Large ribosomal subunit protein eL34 from Staphylothermus marinus (strain ATCC 43588 / DSM 3639 / JCM 9404 / F1).